The sequence spans 382 residues: Guanine nucleotide-binding protein G(s) subunit alpha (382 aa).

Residues 1 to 14 show a composition bias toward polar residues; that stretch reads MGCFGSPTSKQSDV. The tract at residues 1 to 31 is disordered; it reads MGCFGSPTSKQSDVNSEDSKSQKRRSDAISR. The N-palmitoyl glycine moiety is linked to residue G2. C3 is lipidated: S-palmitoyl cysteine. Basic and acidic residues predominate over residues 17 to 31; that stretch reads EDSKSQKRRSDAISR. Residues 42–382 enclose the G-alpha domain; the sequence is ATHRLLLLGA…RMHLRQYELL (341 aa). The segment at 45 to 58 is G1 motif; sequence RLLLLGAGESGKST. GTP is bound by residues 50–57, 51–58, 186–192, 211–215, 212–216, 280–283, 281–284, and A354; these read GAGESGKS, AGESGKST, LRCRVLT, DVGGQ, VGGQR, NKQD, and KQDL. S57 and T192 together coordinate Mg(2+). The G2 motif stretch occupies residues 184 to 192; sequence DILRCRVLT. The segment at 207–216 is G3 motif; it reads FHMFDVGGQR. Positions 276 to 283 are G4 motif; it reads ILFLNKQD. The G5 motif stretch occupies residues 352–357; that stretch reads TCAVDT.

The protein belongs to the G-alpha family. G(s) subfamily. G proteins are composed of 3 units; alpha, beta and gamma. The alpha chain contains the guanine nucleotide binding site.

Its function is as follows. Guanine nucleotide-binding proteins (G proteins) are involved as modulators or transducers in various transmembrane signaling systems. The G(s) protein is involved in hormonal regulation of adenylate cyclase: it activates the cyclase. The polypeptide is Guanine nucleotide-binding protein G(s) subunit alpha (G-salpha60A) (Drosophila pseudoobscura pseudoobscura (Fruit fly)).